A 349-amino-acid chain; its full sequence is GTPase Obg (349 aa).

Residues 1 to 159 (MKFLDEAKVY…RWIWLRLKLI (159 aa)) enclose the Obg domain. In terms of domain architecture, OBG-type G spans 160 to 327 (ADAGLVGLPN…ALRALVEVIG (168 aa)). Residues 166-173 (GLPNAGKS), 191-195 (FTTLH), 212-215 (DIPG), 279-282 (NKID), and 308-310 (SGV) each bind GTP. Ser-173 and Thr-193 together coordinate Mg(2+).

The protein belongs to the TRAFAC class OBG-HflX-like GTPase superfamily. OBG GTPase family. In terms of assembly, monomer. The cofactor is Mg(2+).

It is found in the cytoplasm. In terms of biological role, an essential GTPase which binds GTP, GDP and possibly (p)ppGpp with moderate affinity, with high nucleotide exchange rates and a fairly low GTP hydrolysis rate. Plays a role in control of the cell cycle, stress response, ribosome biogenesis and in those bacteria that undergo differentiation, in morphogenesis control. This is GTPase Obg from Rhodopseudomonas palustris (strain BisB18).